The chain runs to 167 residues: MALLNILHYPDERLHTVAKPVEVFDAALQQQIDDMFETMYEAKGIGLAATQVDYHRRLVVMDISEERDERRVFINPEIVEKDGETVYEEGCLSVPGIYDKVTRAERVKVKAQDRDGKPFELEADGLLAICIQHELDHLNGVVFVERLSQMKQQRIKTKLKKREKQNM.

Fe cation-binding residues include Cys91 and His133. The active site involves Glu134. His137 contacts Fe cation.

It belongs to the polypeptide deformylase family. It depends on Fe(2+) as a cofactor.

It carries out the reaction N-terminal N-formyl-L-methionyl-[peptide] + H2O = N-terminal L-methionyl-[peptide] + formate. Removes the formyl group from the N-terminal Met of newly synthesized proteins. Requires at least a dipeptide for an efficient rate of reaction. N-terminal L-methionine is a prerequisite for activity but the enzyme has broad specificity at other positions. The protein is Peptide deformylase of Chromobacterium violaceum (strain ATCC 12472 / DSM 30191 / JCM 1249 / CCUG 213 / NBRC 12614 / NCIMB 9131 / NCTC 9757 / MK).